The following is an 85-amino-acid chain: UPF0386 protein RHE_CH01859 (85 aa).

The protein belongs to the UPF0386 family.

The protein is UPF0386 protein RHE_CH01859 of Rhizobium etli (strain ATCC 51251 / DSM 11541 / JCM 21823 / NBRC 15573 / CFN 42).